We begin with the raw amino-acid sequence, 270 residues long: Undecaprenyl-diphosphatase 1 (270 aa).

Helical transmembrane passes span 79-99 (NLLL…LLFS), 105-125 (VLFN…IILW), 155-175 (LALI…LFLG), 182-202 (TEFS…YSLI), 215-235 (VFAV…RALL), and 242-262 (SFAV…GTWW).

Belongs to the UppP family.

Its subcellular location is the cell inner membrane. The catalysed reaction is di-trans,octa-cis-undecaprenyl diphosphate + H2O = di-trans,octa-cis-undecaprenyl phosphate + phosphate + H(+). Catalyzes the dephosphorylation of undecaprenyl diphosphate (UPP). Confers resistance to bacitracin. This Chromobacterium violaceum (strain ATCC 12472 / DSM 30191 / JCM 1249 / CCUG 213 / NBRC 12614 / NCIMB 9131 / NCTC 9757 / MK) protein is Undecaprenyl-diphosphatase 1.